Here is a 282-residue protein sequence, read N- to C-terminus: ADP-ribosyl cyclase/cyclic ADP-ribose hydrolase (282 aa).

The N-terminal stretch at 1–24 is a signal peptide; it reads MSPVAIIACVCLAVTLTSISPSEA. 5 disulfides stabilise this stretch: Cys-39–Cys-58, Cys-75–Cys-155, Cys-136–Cys-149, Cys-230–Cys-251, and Cys-263–Cys-272.

Belongs to the ADP-ribosyl cyclase family. Has different isoforms which may be the result of different amounts of phosphorylation. In terms of tissue distribution, immature occoyctes. Oocytes.

Its subcellular location is the cytoplasmic vesicle. It carries out the reaction NAD(+) = cyclic ADP-beta-D-ribose + nicotinamide + H(+). The enzyme catalyses nicotinate + NADP(+) = nicotinate-adenine dinucleotide phosphate + nicotinamide. It catalyses the reaction 2'-phospho-cyclic ADP-ribose + nicotinate = nicotinate-adenine dinucleotide phosphate. Its activity is regulated as follows. Activity is presumably regulated by its sequestration in vesicles before egg fertilization. After fertilization and upon NADase release, it could then be regulated via its potential phosphorylation sites. Synthesizes cyclic ADP-ribose (cADPR), a second messenger for calcium mobilization from endoplasmic reticulum; ADP-ribose is a minor product. Synthesizes the Ca(2+) mobilizer nicotinate-adenine dinucleotide phosphate from 2'-phospho-cADPR and nicotinic acid as well as from NADP(+) and nicotinic acid; with NADP(+) as substrate preferentially catalyzes NADP(+) hydrolysis rather than NAADP(+) synthesis, about 70-fold better at pH 7.4. Has cADPR hydrolase activity at very high enzyme concentrations, which is probably not physiological. The conversion of NAD(+) into ADP-ribose is also only observed at high enzyme concentrations and results from the hydrolysis of cADP-ribose. The polypeptide is ADP-ribosyl cyclase/cyclic ADP-ribose hydrolase (Aplysia californica (California sea hare)).